The primary structure comprises 370 residues: Cyanuric acid amidohydrolase (370 aa).

The segment at 1 to 106 (MRTTSVGVFK…TVFTRREVER (106 aa)) is RU A. Substrate contacts are provided by residues arginine 54 and 85-86 (SG). The RU B stretch occupies residues 115-251 (RLSIGMAHTR…NVVIVLGNSA (137 aa)). Lysine 165 is an active-site residue. Residues arginine 197 and 234 to 235 (SA) contribute to the substrate site. Serine 234 functions as the Nucleophile in the catalytic mechanism. An RU C region spans residues 257–370 (FEIGHAVMND…PVAVIARLSD (114 aa)). Glutamate 302 lines the Mg(2+) pocket. Substrate is bound by residues arginine 329 and 348-349 (SG). Residues alanine 351, glutamine 354, glycine 355, proline 356, and glycine 359 each coordinate Mg(2+).

Belongs to the cyclic amide hydrolase (CyAH) family. In terms of assembly, homotetramer.

The catalysed reaction is cyanurate + H2O = 1-carboxybiuret + H(+). Its pathway is xenobiotic degradation; atrazine degradation; biuret from cyanurate: step 1/1. With respect to regulation, inhibited by barbituric acid. Its function is as follows. Responsible for the hydrolysis of cyanuric acid, an intermediate formed during catabolism of s-triazine based compounds in herbicides such as atrazine and polymers such as melamine. Catalyzes the hydrolytic opening of the s-triazine ring of cyanuric acid (2,4,6-trihydroxy-s-triazine) to yield carbon dioxide and carboxybiuret, which spontaneously decarboxylates to biuret. The protein is Cyanuric acid amidohydrolase of Bradyrhizobium diazoefficiens (strain JCM 10833 / BCRC 13528 / IAM 13628 / NBRC 14792 / USDA 110).